The following is a 154-amino-acid chain: Xanthine-guanine phosphoribosyltransferase (154 aa).

5-phospho-alpha-D-ribose 1-diphosphate is bound by residues 37 to 38 (RG), Arg69, and 88 to 96 (EDLVDSGDT). Arg69 is a binding site for GMP. Asp89 is a Mg(2+) binding site. Asp92 and Ile135 together coordinate guanine. Residues Asp92 and Ile135 each coordinate xanthine. GMP is bound by residues 92–96 (DSGDT) and 134–135 (WI).

It belongs to the purine/pyrimidine phosphoribosyltransferase family. XGPT subfamily. In terms of assembly, homotetramer. Mg(2+) serves as cofactor.

It localises to the cell inner membrane. The catalysed reaction is GMP + diphosphate = guanine + 5-phospho-alpha-D-ribose 1-diphosphate. It catalyses the reaction XMP + diphosphate = xanthine + 5-phospho-alpha-D-ribose 1-diphosphate. The enzyme catalyses IMP + diphosphate = hypoxanthine + 5-phospho-alpha-D-ribose 1-diphosphate. It functions in the pathway purine metabolism; GMP biosynthesis via salvage pathway; GMP from guanine: step 1/1. Its pathway is purine metabolism; XMP biosynthesis via salvage pathway; XMP from xanthine: step 1/1. Its function is as follows. Purine salvage pathway enzyme that catalyzes the transfer of the ribosyl-5-phosphate group from 5-phospho-alpha-D-ribose 1-diphosphate (PRPP) to the N9 position of the 6-oxopurines guanine and xanthine to form the corresponding ribonucleotides GMP (guanosine 5'-monophosphate) and XMP (xanthosine 5'-monophosphate), with the release of PPi. To a lesser extent, also acts on hypoxanthine. This chain is Xanthine-guanine phosphoribosyltransferase, found in Vibrio parahaemolyticus serotype O3:K6 (strain RIMD 2210633).